A 211-amino-acid chain; its full sequence is Thiamine-phosphate synthase (211 aa).

4-amino-2-methyl-5-(diphosphooxymethyl)pyrimidine is bound by residues 37–41 (QLRIK) and N69. Mg(2+) is bound by residues D70 and D89. S108 contributes to the 4-amino-2-methyl-5-(diphosphooxymethyl)pyrimidine binding site. 134–136 (TQT) serves as a coordination point for 2-[(2R,5Z)-2-carboxy-4-methylthiazol-5(2H)-ylidene]ethyl phosphate. 4-amino-2-methyl-5-(diphosphooxymethyl)pyrimidine is bound at residue K137. Residues G166 and 186–187 (VS) contribute to the 2-[(2R,5Z)-2-carboxy-4-methylthiazol-5(2H)-ylidene]ethyl phosphate site.

It belongs to the thiamine-phosphate synthase family. Mg(2+) serves as cofactor.

It carries out the reaction 2-[(2R,5Z)-2-carboxy-4-methylthiazol-5(2H)-ylidene]ethyl phosphate + 4-amino-2-methyl-5-(diphosphooxymethyl)pyrimidine + 2 H(+) = thiamine phosphate + CO2 + diphosphate. The enzyme catalyses 2-(2-carboxy-4-methylthiazol-5-yl)ethyl phosphate + 4-amino-2-methyl-5-(diphosphooxymethyl)pyrimidine + 2 H(+) = thiamine phosphate + CO2 + diphosphate. The catalysed reaction is 4-methyl-5-(2-phosphooxyethyl)-thiazole + 4-amino-2-methyl-5-(diphosphooxymethyl)pyrimidine + H(+) = thiamine phosphate + diphosphate. Its pathway is cofactor biosynthesis; thiamine diphosphate biosynthesis; thiamine phosphate from 4-amino-2-methyl-5-diphosphomethylpyrimidine and 4-methyl-5-(2-phosphoethyl)-thiazole: step 1/1. Functionally, condenses 4-methyl-5-(beta-hydroxyethyl)thiazole monophosphate (THZ-P) and 2-methyl-4-amino-5-hydroxymethyl pyrimidine pyrophosphate (HMP-PP) to form thiamine monophosphate (TMP). The protein is Thiamine-phosphate synthase of Salmonella newport (strain SL254).